We begin with the raw amino-acid sequence, 317 residues long: Lipoyl synthase (317 aa).

7 residues coordinate [4Fe-4S] cluster: Cys56, Cys61, Cys67, Cys82, Cys86, Cys89, and Ser298. The Radical SAM core domain occupies 68–287; that stretch reads WEDREATFLI…KEEAEQIGFS (220 aa).

This sequence belongs to the radical SAM superfamily. Lipoyl synthase family. [4Fe-4S] cluster is required as a cofactor.

The protein resides in the cytoplasm. It carries out the reaction [[Fe-S] cluster scaffold protein carrying a second [4Fe-4S](2+) cluster] + N(6)-octanoyl-L-lysyl-[protein] + 2 oxidized [2Fe-2S]-[ferredoxin] + 2 S-adenosyl-L-methionine + 4 H(+) = [[Fe-S] cluster scaffold protein] + N(6)-[(R)-dihydrolipoyl]-L-lysyl-[protein] + 4 Fe(3+) + 2 hydrogen sulfide + 2 5'-deoxyadenosine + 2 L-methionine + 2 reduced [2Fe-2S]-[ferredoxin]. It participates in protein modification; protein lipoylation via endogenous pathway; protein N(6)-(lipoyl)lysine from octanoyl-[acyl-carrier-protein]: step 2/2. Catalyzes the radical-mediated insertion of two sulfur atoms into the C-6 and C-8 positions of the octanoyl moiety bound to the lipoyl domains of lipoate-dependent enzymes, thereby converting the octanoylated domains into lipoylated derivatives. This chain is Lipoyl synthase, found in Streptomyces coelicolor (strain ATCC BAA-471 / A3(2) / M145).